The primary structure comprises 1300 residues: Serine protease EspP (1300 aa).

The N-terminal stretch at 1 to 55 is a signal peptide; that stretch reads MNKIYSLKYSHITGGLIAVSELSGRVSSRATGKKKHKRILALCFLGLLQSSYSFA. The 255-residue stretch at 57 to 311 folds into the Peptidase S6 domain; sequence QMDISNFYIR…NQTTIDNLKN (255 aa). Active-site charge relay system residues include histidine 127, aspartate 156, and serine 263. Residues 1034 to 1300 enclose the Autotransporter domain; that stretch reads DINGEAGAWA…AVNANFRYSF (267 aa).

In terms of processing, cleaved to release the mature protein from the outer membrane.

The protein localises to the periplasm. The protein resides in the secreted. It localises to the cell surface. It is found in the cell outer membrane. Its function is as follows. Serine protease with cytotoxic effect. Disrupts actin cytoskeleton resulting cell detachment in vitro. This is Serine protease EspP (espP) from Escherichia coli.